The sequence spans 339 residues: D-erythrose-4-phosphate dehydrogenase (339 aa).

NAD(+)-binding positions include 12–13 (RI) and Arg81. Residues 154 to 156 (SCT), Arg200, 213 to 214 (TK), and Arg236 each bind substrate. Cys155 acts as the Nucleophile in catalysis. Asn318 provides a ligand contact to NAD(+).

The protein belongs to the glyceraldehyde-3-phosphate dehydrogenase family. Epd subfamily. As to quaternary structure, homotetramer.

The protein resides in the cytoplasm. The enzyme catalyses D-erythrose 4-phosphate + NAD(+) + H2O = 4-phospho-D-erythronate + NADH + 2 H(+). Its pathway is cofactor biosynthesis; pyridoxine 5'-phosphate biosynthesis; pyridoxine 5'-phosphate from D-erythrose 4-phosphate: step 1/5. In terms of biological role, catalyzes the NAD-dependent conversion of D-erythrose 4-phosphate to 4-phosphoerythronate. The chain is D-erythrose-4-phosphate dehydrogenase from Shigella dysenteriae serotype 1 (strain Sd197).